Consider the following 326-residue polypeptide: Porin-like protein H (326 aa).

The first 19 residues, 1–19, serve as a signal peptide directing secretion; it reads MKKTLVALAILTAAGSANA.

It belongs to the Gram-negative porin family. As to quaternary structure, oligomer.

Its subcellular location is the cell outer membrane. Functionally, forms pores that allow passive diffusion of small molecules across the outer membrane. This Photobacterium profundum (strain SS9) protein is Porin-like protein H (ompH).